We begin with the raw amino-acid sequence, 107 residues long: Circadian clock oscillator protein KaiB (107 aa).

It belongs to the KaiB family. In terms of assembly, may undergo a major conformational rearrangment; in the free state forms homooligomers. When bound to KaiC switches to a monomeric thioredoxin-fold (KaiB(fs)). The active oscillator complex is probably KaiC(6):KaiB(6).

In terms of biological role, component of the KaiBC clock protein complex, which constitutes the main circadian regulator in cyanobacteria; it may modify the ATPase activity of KaiC. May be a metamorphic protein which reversibly switches between an inactive tetrameric fold and a rare, thioredoxin-like monomeric fold (KaiB(fs)). KaiB(fs) binds phospho-KaiC, and perhaps clock output effectors. The chain is Circadian clock oscillator protein KaiB from Prochlorococcus marinus (strain NATL2A).